Reading from the N-terminus, the 347-residue chain is NADH-ubiquinone oxidoreductase chain 2 (347 aa).

11 consecutive transmembrane segments (helical) span residues 1-21, 25-45, 59-79, 96-116, 122-142, 145-165, 178-198, 201-221, 237-257, 276-296, and 326-346; these read MNPL…MIVM, HWLT…PILM, YFLT…INLL, IIMT…FWVP, IQLS…MSIL, IFPT…VAIG, IMAY…AYNP, TLLN…MFML, APLL…LPPL, IITP…YMRL, and VSPL…LMLL.

Belongs to the complex I subunit 2 family. As to quaternary structure, core subunit of respiratory chain NADH dehydrogenase (Complex I) which is composed of 45 different subunits. Interacts with TMEM242.

Its subcellular location is the mitochondrion inner membrane. It carries out the reaction a ubiquinone + NADH + 5 H(+)(in) = a ubiquinol + NAD(+) + 4 H(+)(out). In terms of biological role, core subunit of the mitochondrial membrane respiratory chain NADH dehydrogenase (Complex I) which catalyzes electron transfer from NADH through the respiratory chain, using ubiquinone as an electron acceptor. Essential for the catalytic activity and assembly of complex I. The protein is NADH-ubiquinone oxidoreductase chain 2 of Boneia bidens (Manado fruit bat).